A 553-amino-acid chain; its full sequence is Glycerol-3-phosphate dehydrogenase (553 aa).

13-41 (DLIVIGGGINGVGTARDGALRGLKTLLIE) is a binding site for FAD.

It belongs to the FAD-dependent glycerol-3-phosphate dehydrogenase family. FAD is required as a cofactor.

The protein resides in the cytoplasm. It catalyses the reaction a quinone + sn-glycerol 3-phosphate = dihydroxyacetone phosphate + a quinol. This is Glycerol-3-phosphate dehydrogenase (glpD) from Synechocystis sp. (strain ATCC 27184 / PCC 6803 / Kazusa).